A 450-amino-acid polypeptide reads, in one-letter code: Phosphoglucosamine mutase (450 aa).

Residue S103 is the Phosphoserine intermediate of the active site. 4 residues coordinate Mg(2+): S103, D243, D245, and D247. S103 is modified (phosphoserine).

It belongs to the phosphohexose mutase family. It depends on Mg(2+) as a cofactor. In terms of processing, activated by phosphorylation.

The catalysed reaction is alpha-D-glucosamine 1-phosphate = D-glucosamine 6-phosphate. Its function is as follows. Catalyzes the conversion of glucosamine-6-phosphate to glucosamine-1-phosphate. In Lactobacillus helveticus (strain DPC 4571), this protein is Phosphoglucosamine mutase.